A 275-amino-acid polypeptide reads, in one-letter code: uncharacterized protein (275 aa).

The ABC transmembrane type-1 domain occupies 1 to 162; that stretch reads NLFSVIVSLI…ITSYWTEVQR (162 aa). 3 helical membrane-spanning segments follow: residues 21–41, 106–126, and 137–157; these read LYLV…GNIM, IMNL…YYLM, and FAYV…TSYW.

Its subcellular location is the cell membrane. This is an uncharacterized protein from Staphylococcus epidermidis.